The following is a 568-amino-acid chain: MDYRRLLMSRVVPGQFDDADSSDSENRDLKTVKEKDDILFEDLQDNVNENGEGEIEDEEEEGYDDDDDDWDWDEGVGKLAKGYVWNGGSNPQANRQTSDSSSAKMSTPADKVLRKFENKINLDKLNVTDSVINKVTEKSRQKEADMYRIKDKADRATVEQVLDPRTRMILFKMLTRGIITEINGCISTGKEANVYHASTANGESRAIKIYKTSILVFKDRDKYVSGEFRFRHGYCKGNPRKMVKTWAEKEMRNLIRLNTAEIPCPEPIMLRSHVLVMSFIGKDDMPAPLLKNVQLSESKARELYLQVIQYMRRMYQDARLVHADLSEFNMLYHGGGVYIIDVSQSVEHDHPHALEFLRKDCANVNDFFMRHSVAVMTVRELFEFVTDPSITHENMDAYLSKAMEIASQRTKEERSSQDHVDEEVFKRAYIPRTLNEVKNYERDMDIIMKLKEEDMAMNAQQDNILYQTVTGLKKDLSGVQKVPALLENQVEERTCSDSEDIGSSECSDTDSEEQGDHARPKKHTTDPDIDKKERKKMVKEAQREKRKNKIPKHVKKRKEKTAKTKKGK.

2 disordered regions span residues 14–70 and 83–109; these read GQFD…DDDW and YVWNGGSNPQANRQTSDSSSAKMSTPA. Phosphoserine is present on residues serine 21 and serine 22. A compositionally biased stretch (basic and acidic residues) spans 24 to 38; that stretch reads SENRDLKTVKEKDDI. The segment covering 51–70 has biased composition (acidic residues); the sequence is GEGEIEDEEEEGYDDDDDDW. Residues 87-105 show a composition bias toward polar residues; that stretch reads GGSNPQANRQTSDSSSAKM. In terms of domain architecture, Protein kinase spans 180–479; it reads TEINGCISTG…TGLKKDLSGV (300 aa). ATP is bound by residues lysine 208, serine 278, and isoleucine 280. Aspartate 324 acts as the Proton acceptor in catalysis. Residues asparagine 329 and aspartate 341 each coordinate Mg(2+). The 4-aspartylphosphate intermediate role is filled by aspartate 341. The tract at residues 490-568 is disordered; it reads VEERTCSDSE…EKTAKTKKGK (79 aa). Over residues 497–513 the composition is skewed to acidic residues; sequence DSEDIGSSECSDTDSEE. Residues 514-543 show a composition bias toward basic and acidic residues; it reads QGDHARPKKHTTDPDIDKKERKKMVKEAQR. Basic residues predominate over residues 544–568; it reads EKRKNKIPKHVKKRKEKTAKTKKGK.

This sequence belongs to the protein kinase superfamily. RIO-type Ser/Thr kinase family. Associates with the precursor of the 40S ribosome subunit. Interacts (via its N-terminus) with PRMT5 (via its N-terminus). Interacts with WDR77. Found in a PRMT5 complex composed of PRMT5, WDR77 and RIOK1. Interacts (via its C-terminus) with NCL; this interaction targets NCL for PRTM5 methylation. The cofactor is Mg(2+).

Its subcellular location is the cytoplasm. The protein localises to the cytosol. It catalyses the reaction L-seryl-[protein] + ATP = O-phospho-L-seryl-[protein] + ADP + H(+). It carries out the reaction L-threonyl-[protein] + ATP = O-phospho-L-threonyl-[protein] + ADP + H(+). The enzyme catalyses ATP + H2O = ADP + phosphate + H(+). In terms of biological role, involved in the final steps of cytoplasmic maturation of the 40S ribosomal subunit. Involved in processing of 18S-E pre-rRNA to the mature 18S rRNA. Required for the recycling of NOB1 and PNO1 from the late 40S precursor. The association with the very late 40S subunit intermediate may involve a translation-like checkpoint point cycle preceeding the binding to the 60S ribosomal subunit. Despite the protein kinase domain is proposed to act predominantly as an ATPase. The catalytic activity regulates its dynamic association with the 40S subunit. In addition to its role in ribosomal biogenesis acts as an adapter protein by recruiting NCL/nucleolin the to PRMT5 complex for its symmetrical methylation. The sequence is that of Serine/threonine-protein kinase RIO1 from Homo sapiens (Human).